A 278-amino-acid chain; its full sequence is Indole-3-glycerol phosphate synthase (278 aa).

It belongs to the TrpC family.

The catalysed reaction is 1-(2-carboxyphenylamino)-1-deoxy-D-ribulose 5-phosphate + H(+) = (1S,2R)-1-C-(indol-3-yl)glycerol 3-phosphate + CO2 + H2O. The protein operates within amino-acid biosynthesis; L-tryptophan biosynthesis; L-tryptophan from chorismate: step 4/5. The protein is Indole-3-glycerol phosphate synthase of Pseudomonas paraeruginosa (strain DSM 24068 / PA7) (Pseudomonas aeruginosa (strain PA7)).